Reading from the N-terminus, the 656-residue chain is uncharacterized protein (656 aa).

3 consecutive transmembrane segments (helical) span residues 7 to 27 (QQVLTFVSSLSTFVTIILNHL), 40 to 60 (LMAMTTLMVSLLMSSLTFWTL), and 210 to 230 (AVFISIWLMVILGAAFNAFTI). In terms of domain architecture, HAMP spans 231-280 (TRPIRELLTGVKNIASGDFYQRIDLPFGGELGALIFNFNEMAERLEKYEQ). The 71-residue stretch at 289–359 (EKAKLETLVS…PILNDIIRKN (71 aa)) folds into the PAS domain. Residues 424-654 (NVSHELRTPL…CFFFDLMIAK (231 aa)) form the Histidine kinase domain. Histidine 427 carries the post-translational modification Phosphohistidine; by autocatalysis.

It is found in the plastid. The protein resides in the chloroplast membrane. It carries out the reaction ATP + protein L-histidine = ADP + protein N-phospho-L-histidine.. This is an uncharacterized protein from Porphyra purpurea (Red seaweed).